We begin with the raw amino-acid sequence, 56 residues long: MSTYTVRGSFPARDGPQQFEKEVEAPNENVAEERVYSDFGSQHNLKRTQITIEEVA.

A disordered region spans residues 1–24; that stretch reads MSTYTVRGSFPARDGPQQFEKEVE.

It belongs to the eukaryotic ribosomal protein eL20 family. As to quaternary structure, part of the 50S ribosomal subunit. Binds 23S rRNA.

This is Large ribosomal subunit protein eL20 from Haloarcula marismortui (strain ATCC 43049 / DSM 3752 / JCM 8966 / VKM B-1809) (Halobacterium marismortui).